We begin with the raw amino-acid sequence, 369 residues long: Ribonuclease 3 (369 aa).

Residues 6–142 enclose the RNase III domain; that stretch reads IGFVQSSINY…IIGAVAADCD (137 aa). Glu-46 lines the Mg(2+) pocket. Residue Asp-50 is part of the active site. Mg(2+) is bound by residues Asp-128 and Glu-131. Glu-131 is a catalytic residue. The DRBM domain occupies 272-341; it reads NPASTLHELF…SLKLLKFIAK (70 aa).

This sequence belongs to the ribonuclease III family. In terms of assembly, homodimer. Requires Mg(2+) as cofactor.

It is found in the cytoplasm. It catalyses the reaction Endonucleolytic cleavage to 5'-phosphomonoester.. In terms of biological role, digests double-stranded RNA. Involved in the processing of primary rRNA transcript to yield the immediate precursors to the large and small rRNAs (23S and 16S). Processes some mRNAs, and tRNAs when they are encoded in the rRNA operon. Processes pre-crRNA and tracrRNA of type II CRISPR loci if present in the organism. The chain is Ribonuclease 3 (rnc) from Treponema succinifaciens (strain ATCC 33096 / DSM 2489 / 6091).